The following is a 276-amino-acid chain: Diaminopimelate epimerase (276 aa).

Substrate-binding residues include N11, Q44, and N64. The active-site Proton donor is C73. Substrate contacts are provided by residues 74–75 (IN), N159, N192, and 210–211 (ER). The active-site Proton acceptor is C219. 220–221 (GS) is a substrate binding site.

This sequence belongs to the diaminopimelate epimerase family. In terms of assembly, homodimer.

It is found in the cytoplasm. The enzyme catalyses (2S,6S)-2,6-diaminopimelate = meso-2,6-diaminopimelate. Its pathway is amino-acid biosynthesis; L-lysine biosynthesis via DAP pathway; DL-2,6-diaminopimelate from LL-2,6-diaminopimelate: step 1/1. In terms of biological role, catalyzes the stereoinversion of LL-2,6-diaminopimelate (L,L-DAP) to meso-diaminopimelate (meso-DAP), a precursor of L-lysine and an essential component of the bacterial peptidoglycan. This Wigglesworthia glossinidia brevipalpis protein is Diaminopimelate epimerase.